Consider the following 243-residue polypeptide: Tryptophan synthase alpha chain (243 aa).

Catalysis depends on proton acceptor residues Glu31 and Asp42.

This sequence belongs to the TrpA family. As to quaternary structure, tetramer of two alpha and two beta chains.

The enzyme catalyses (1S,2R)-1-C-(indol-3-yl)glycerol 3-phosphate + L-serine = D-glyceraldehyde 3-phosphate + L-tryptophan + H2O. Its pathway is amino-acid biosynthesis; L-tryptophan biosynthesis; L-tryptophan from chorismate: step 5/5. Its function is as follows. The alpha subunit is responsible for the aldol cleavage of indoleglycerol phosphate to indole and glyceraldehyde 3-phosphate. This is Tryptophan synthase alpha chain from Staphylococcus epidermidis (strain ATCC 35984 / DSM 28319 / BCRC 17069 / CCUG 31568 / BM 3577 / RP62A).